The primary structure comprises 249 residues: Metal-staphylopine import system ATP-binding protein CntF (249 aa).

An ABC transporter domain is found at 2–244 (IKVTDVEKSY…DNAYTRELIE (243 aa)). Position 42–49 (42–49 (GESGSGKS)) interacts with ATP.

It belongs to the ABC transporter superfamily. In terms of assembly, the complex is composed of two ATP-binding proteins (CntD and CntF), two transmembrane proteins (CntB and CntC) and a solute-binding protein (CntA).

Its subcellular location is the cell membrane. Functionally, part of the ABC transporter complex CntABCDF (Opp1) involved in the uptake of metal in complex with the metallophore staphylopine (StP). May be involved in the import of a large array of divalent metals ions such as nickel, cobalt, zinc, copper and iron. Probably responsible for energy coupling to the transport system. This Staphylococcus aureus (strain Mu50 / ATCC 700699) protein is Metal-staphylopine import system ATP-binding protein CntF.